Consider the following 1018-residue polypeptide: Integrator complex subunit 5 (1018 aa).

The segment at 1 to 26 (MSALCDPPGAPGPPGPAPATHGPAPL) is disordered. At Ser2 the chain carries N-acetylserine. Over residues 8-17 (PGAPGPPGPA) the composition is skewed to pro residues. A Phosphoserine modification is found at Ser278. 3 consecutive transmembrane segments (helical) span residues 533–553 (LATQLYAGLVVSLSGLLPLAF), 855–875 (LLFELLKLVAAAPPALCYCSV), and 929–949 (VFSQLAPFEVRLLLLSVWGFL).

The protein belongs to the Integrator subunit 5 family. Component of the Integrator complex, composed of core subunits INTS1, INTS2, INTS3, INTS4, INTS5, INTS6, INTS7, INTS8, INTS9/RC74, INTS10, INTS11/CPSF3L, INTS12, INTS13, INTS14 and INTS15. The core complex associates with protein phosphatase 2A subunits PPP2CA and PPP2R1A, to form the Integrator-PP2A (INTAC) complex.

The protein localises to the nucleus. It localises to the cytoplasm. It is found in the nucleus membrane. Functionally, component of the integrator complex, a multiprotein complex that terminates RNA polymerase II (Pol II) transcription in the promoter-proximal region of genes. The integrator complex provides a quality checkpoint during transcription elongation by driving premature transcription termination of transcripts that are unfavorably configured for transcriptional elongation: the complex terminates transcription by (1) catalyzing dephosphorylation of the C-terminal domain (CTD) of Pol II subunit POLR2A/RPB1 and SUPT5H/SPT5, (2) degrading the exiting nascent RNA transcript via endonuclease activity and (3) promoting the release of Pol II from bound DNA. The integrator complex is also involved in terminating the synthesis of non-coding Pol II transcripts, such as enhancer RNAs (eRNAs), small nuclear RNAs (snRNAs), telomerase RNAs and long non-coding RNAs (lncRNAs). Mediates recruitment of cytoplasmic dynein to the nuclear envelope, probably as component of the integrator complex. The sequence is that of Integrator complex subunit 5 (Ints5) from Mus musculus (Mouse).